A 245-amino-acid chain; its full sequence is Eukaryotic translation initiation factor 4E type 2 (245 aa).

Positions 1–38 (MNNKFDALKDDDSGDHDQNEENSTQKDGEKEKTERDKN) are enriched in basic and acidic residues. Residues 1 to 52 (MNNKFDALKDDDSGDHDQNEENSTQKDGEKEKTERDKNQSSSKRKAVVPGPA) are disordered. Ser-13 carries the phosphoserine modification. Residues 54–57 (HPLQ) are EIF4EBP1/2/3 binding. 78–79 (YE) is a binding site for mRNA. Residues 95–99 (WRFYS) are EIF4EBP1/2/3 binding. MRNA contacts are provided by residues His-110 and 124 to 125 (WE). The residue at position 134 (Lys-134) is an N6-acetyllysine; alternate. Lys-134 is covalently cross-linked (Glycyl lysine isopeptide (Lys-Gly) (interchain with G-Cter in ISG15); alternate). The segment at 150 to 157 (NLILAMLG) is EIF4EBP1/2/3 binding. MRNA contacts are provided by residues 174–179 (RFQEDI) and 222–224 (KMP). A Glycyl lysine isopeptide (Lys-Gly) (interchain with G-Cter in ISG15) cross-link involves residue Lys-222.

This sequence belongs to the eukaryotic initiation factor 4E family. As to quaternary structure, interacts with EIF4EBP1, EIF4EBP2 and EIF4EBP3. Does not interact with eIF4G (EIF4G1, EIF4G2 or EIF4G3). Component of the 4EHP-GYF2 complex, at least composed of EIF4E2, GIGYF2 and ZNF598. Interacts with GIGYF2 (via the 4EHP-binding motif); the interaction is direct. Interacts with EIF4ENIF1/4E-T (via YXXXXLphi motif); increasing affinity for the 7-methylguanosine-containing mRNA cap. In terms of processing, ubiquitinated by ARIH1. The consequences of ubiquitination are however unclear: according to a report, EIF4E2 ubiquitination leads to promote EIF4E2 cap-binding and protein translation arrest. According to another report ubiquitination leads to its subsequent degradation. ISGylation enhances its cap structure-binding activity and translation-inhibition activity.

It is found in the cytoplasm. The protein localises to the P-body. Its function is as follows. Recognizes and binds the 7-methylguanosine-containing mRNA cap during an early step in the initiation. Acts as a repressor of translation initiation. In contrast to EIF4E, it is unable to bind eIF4G (EIF4G1, EIF4G2 or EIF4G3), suggesting that it acts by competing with EIF4E and block assembly of eIF4F at the cap. In P-bodies, component of a complex that promotes miRNA-mediated translational repression. Involved in virus-induced host response by mediating miRNA MIR34A-induced translational silencing which controls IFNB1 production by a negative feedback mechanism. In terms of biological role, component of the 4EHP-GYF2 complex, a multiprotein complex that acts as a repressor of translation initiation. In association with GIGYF2, assists ribosome-associated quality control (RQC) by sequestering the mRNA cap, blocking ribosome initiation and decreasing the translational load on problematic messages. Part of a pathway that works in parallel to RQC-mediated degradation of the stalled nascent polypeptide. GIGYF2 and EIF4E2 work downstream and independently of ZNF598, which seems to work as a scaffold that can recruit them to faulty mRNA even if alternative recruitment mechanisms may exist. Functionally, (Microbial infection) Upon SARS coronavirus-2/SARS-CoV-2 infection, the interaction with non-structural protein 2 (nsp2) with GIGYF2 enhances GIGYF2 binding to EIF4E2 and increases repression of translation initiation of genes involved in antiviral innate immune response such as IFNB1. In Homo sapiens (Human), this protein is Eukaryotic translation initiation factor 4E type 2.